The primary structure comprises 107 residues: Ig kappa chain V-VI region NQ2-17.4.1 (107 aa).

A framework-1 region spans residues 1 to 23 (QIVLTQSPAIMSASPGQKVTMTC). Cysteines 23 and 87 form a disulfide. Positions 24-33 (SASSSVSYMH) are complementarity-determining-1. The segment at 34–48 (WYQQKSGTSPKRWIY) is framework-2. A complementarity-determining-2 region spans residues 49–55 (DTSKLAS). A framework-3 region spans residues 56 to 87 (GVPARFSGSGSATSYSLTITSMQAEDAATYYC). The segment at 88–96 (QQWSSNPLT) is complementarity-determining-3. The framework-4 stretch occupies residues 97–106 (FGAGTKLELK).

In terms of biological role, anti-2-phenyl oxazolone (PHOX) Antibody. This is Ig kappa chain V-VI region NQ2-17.4.1 from Mus musculus (Mouse).